Reading from the N-terminus, the 177-residue chain is MSEIATVARPYAKAAFDFAVENQAVDKWQVMLAFTAEVARNEQVTELLSGSLASEKLADIFIDLCGDQIDEHAQNLIRVMAENDRLSTLPEVLSQFIQLRAVLESTVDVEVTSAIELTKQQLANISAAMEKRLSRKVKLNCKIDKSVIAGMIIRAGDLVIDGSVRGRLERLTDVLQS.

This sequence belongs to the ATPase delta chain family. In terms of assembly, F-type ATPases have 2 components, F(1) - the catalytic core - and F(0) - the membrane proton channel. F(1) has five subunits: alpha(3), beta(3), gamma(1), delta(1), epsilon(1). F(0) has three main subunits: a(1), b(2) and c(10-14). The alpha and beta chains form an alternating ring which encloses part of the gamma chain. F(1) is attached to F(0) by a central stalk formed by the gamma and epsilon chains, while a peripheral stalk is formed by the delta and b chains.

Its subcellular location is the cell inner membrane. Functionally, f(1)F(0) ATP synthase produces ATP from ADP in the presence of a proton or sodium gradient. F-type ATPases consist of two structural domains, F(1) containing the extramembraneous catalytic core and F(0) containing the membrane proton channel, linked together by a central stalk and a peripheral stalk. During catalysis, ATP synthesis in the catalytic domain of F(1) is coupled via a rotary mechanism of the central stalk subunits to proton translocation. In terms of biological role, this protein is part of the stalk that links CF(0) to CF(1). It either transmits conformational changes from CF(0) to CF(1) or is implicated in proton conduction. The chain is ATP synthase subunit delta from Proteus mirabilis (strain HI4320).